The primary structure comprises 581 residues: Netrin-3 (581 aa).

A signal peptide spans L1–A15. One can recognise a Laminin N-terminal domain in the interval A35 to R261. 2 N-linked (GlcNAc...) asparagine glycosylation sites follow: N88 and N103. 15 cysteine pairs are disulfide-bonded: C91–C124, C262–C271, C264–C281, C283–C292, C295–C315, C318–C327, C320–C345, C348–C357, C360–C378, C381–C393, C383–C400, C402–C411, C414–C428, C449–C521, and C468–C578. 3 Laminin EGF-like domains span residues C262–A317, C318–A380, and C381–K430. The N-linked (GlcNAc...) asparagine glycan is linked to N394. The 130-residue stretch at C449–C578 folds into the NTR domain. A Cell attachment site motif is present at residues R507 to D509. An N-linked (GlcNAc...) asparagine glycan is attached at N540.

The protein resides in the secreted. The protein localises to the extracellular space. Its subcellular location is the extracellular matrix. In terms of biological role, netrins control guidance of CNS commissural axons and peripheral motor axons. In Gallus gallus (Chicken), this protein is Netrin-3 (NTN3).